A 348-amino-acid polypeptide reads, in one-letter code: MYRPDLLAFLLPLLAAPVFSAETLDCGKIRADGHTFDLSKLGGPHSVVTTRYKPNPAGHYNTTYTLDVCKPLKKSGGSKSECPNGTRVCAITHLLKSDGDKKEEDEVTDIVAIAGNLENAGGSRFEWTPTRLSTAESDSDKKKEGLRLVLTGGKDPLSGPSKEKTDQKAIIEFLCDPNKEGTEGEWVSEEKYEKRADEKKDDDKKEDGGDKDEGESTLEHQLKHENASLIWDGFEVEKDVGILRLTWHTKYACEKRDESGGGGSDDGGDNSSSHWGFFTWFVLIAFLLIAGYLIFSSWINFTRYGARGWDLLPHSDTIRDIPYLLKDFIRRILNTVQGTGSRGGYSAV.

The first 20 residues, 1-20 (MYRPDLLAFLLPLLAAPVFS), serve as a signal peptide directing secretion. Over 21 to 274 (AETLDCGKIR…DDGGDNSSSH (254 aa)) the chain is Lumenal. Positions 24–255 (LDCGKIRADG…TWHTKYACEK (232 aa)) constitute an MRH domain. Cystine bridges form between cysteine 26–cysteine 69, cysteine 82–cysteine 89, and cysteine 175–cysteine 253. 2 N-linked (GlcNAc...) asparagine glycosylation sites follow: asparagine 61 and asparagine 84. Over residues 180 to 208 (EGTEGEWVSEEKYEKRADEKKDDDKKEDG) the composition is skewed to basic and acidic residues. Residues 180–219 (EGTEGEWVSEEKYEKRADEKKDDDKKEDGGDKDEGESTLE) form a disordered region. N-linked (GlcNAc...) asparagine glycans are attached at residues asparagine 226 and asparagine 270. The chain crosses the membrane as a helical span at residues 275–295 (WGFFTWFVLIAFLLIAGYLIF). Topologically, residues 296-348 (SSWINFTRYGARGWDLLPHSDTIRDIPYLLKDFIRRILNTVQGTGSRGGYSAV) are cytoplasmic.

This sequence belongs to the ATG27 family. In terms of assembly, forms a complex with ATG9 and ATG23.

It is found in the cytoplasmic vesicle membrane. The protein resides in the golgi apparatus membrane. The protein localises to the mitochondrion membrane. It localises to the preautophagosomal structure membrane. Functionally, effector of VPS34 phosphatidylinositol 3-phosphate kinase signaling. Regulates the cytoplasm to vacuole transport (Cvt) vesicle formation. Plays a role in ATG protein retrieval from the pre-autophagosomal structure (PAS) and is especially required for autophagy-dependent cycling of ATG9. Autophagy is required for proper vegetative growth, asexual/sexual reproduction, and full virulence. Autophagy is particularly involved in the biosynthesis of deoxynivalenol (DON), an important virulence determinant. This Gibberella zeae (strain ATCC MYA-4620 / CBS 123657 / FGSC 9075 / NRRL 31084 / PH-1) (Wheat head blight fungus) protein is Autophagy-related protein 27.